The sequence spans 69 residues: MFGKLGMPELVLIFAVALVIFGPSKLPEIGKSLGKSIKEFKKFSKEMKDDLSLEERETKDKDTVKVKEE.

A helical membrane pass occupies residues M1–F21.

This sequence belongs to the TatA/E family. Forms a complex with TatC.

It is found in the cell membrane. Functionally, part of the twin-arginine translocation (Tat) system that transports large folded proteins containing a characteristic twin-arginine motif in their signal peptide across membranes. TatA could form the protein-conducting channel of the Tat system. In Alkaliphilus metalliredigens (strain QYMF), this protein is Sec-independent protein translocase protein TatA.